Here is a 536-residue protein sequence, read N- to C-terminus: CTP synthase (536 aa).

The tract at residues 1-267 (MSKFVFVTGG…CKETLKYLEL (267 aa)) is amidoligase domain. CTP is bound at residue serine 13. Serine 13 serves as a coordination point for UTP. ATP is bound by residues 14–19 (SIGKGI) and aspartate 71. Residues aspartate 71 and glutamate 141 each contribute to the Mg(2+) site. CTP contacts are provided by residues 148–150 (DIE), 188–193 (KTKPTQ), and lysine 224. UTP is bound by residues 188 to 193 (KTKPTQ) and lysine 224. One can recognise a Glutamine amidotransferase type-1 domain in the interval 292 to 534 (KVALVGKYIE…IKSSQENLTQ (243 aa)). Glycine 354 is a binding site for L-glutamine. Cysteine 381 (nucleophile; for glutamine hydrolysis) is an active-site residue. L-glutamine-binding positions include 382-385 (LGMQ), glutamate 405, and arginine 462. Active-site residues include histidine 507 and glutamate 509.

The protein belongs to the CTP synthase family. As to quaternary structure, homotetramer.

The enzyme catalyses UTP + L-glutamine + ATP + H2O = CTP + L-glutamate + ADP + phosphate + 2 H(+). The catalysed reaction is L-glutamine + H2O = L-glutamate + NH4(+). It catalyses the reaction UTP + NH4(+) + ATP = CTP + ADP + phosphate + 2 H(+). The protein operates within pyrimidine metabolism; CTP biosynthesis via de novo pathway; CTP from UDP: step 2/2. Its activity is regulated as follows. Allosterically activated by GTP, when glutamine is the substrate; GTP has no effect on the reaction when ammonia is the substrate. The allosteric effector GTP functions by stabilizing the protein conformation that binds the tetrahedral intermediate(s) formed during glutamine hydrolysis. Inhibited by the product CTP, via allosteric rather than competitive inhibition. In terms of biological role, catalyzes the ATP-dependent amination of UTP to CTP with either L-glutamine or ammonia as the source of nitrogen. Regulates intracellular CTP levels through interactions with the four ribonucleotide triphosphates. The protein is CTP synthase of Prochlorococcus marinus (strain MIT 9312).